The chain runs to 239 residues: Orotidine 5'-phosphate decarboxylase (239 aa).

Residues Asp-15, Lys-37, 64-73 (DLKFHDIPNT), Thr-126, Arg-187, Gln-196, Gly-216, and Arg-217 contribute to the substrate site. Lys-66 (proton donor) is an active-site residue.

Belongs to the OMP decarboxylase family. Type 1 subfamily. In terms of assembly, homodimer.

The catalysed reaction is orotidine 5'-phosphate + H(+) = UMP + CO2. It participates in pyrimidine metabolism; UMP biosynthesis via de novo pathway; UMP from orotate: step 2/2. Catalyzes the decarboxylation of orotidine 5'-monophosphate (OMP) to uridine 5'-monophosphate (UMP). The polypeptide is Orotidine 5'-phosphate decarboxylase (Geobacter metallireducens (strain ATCC 53774 / DSM 7210 / GS-15)).